A 281-amino-acid polypeptide reads, in one-letter code: 2-dehydro-3-deoxyphosphooctonate aldolase (281 aa).

The protein belongs to the KdsA family.

It is found in the cytoplasm. It catalyses the reaction D-arabinose 5-phosphate + phosphoenolpyruvate + H2O = 3-deoxy-alpha-D-manno-2-octulosonate-8-phosphate + phosphate. It functions in the pathway carbohydrate biosynthesis; 3-deoxy-D-manno-octulosonate biosynthesis; 3-deoxy-D-manno-octulosonate from D-ribulose 5-phosphate: step 2/3. It participates in bacterial outer membrane biogenesis; lipopolysaccharide biosynthesis. The sequence is that of 2-dehydro-3-deoxyphosphooctonate aldolase from Pseudomonas entomophila (strain L48).